The primary structure comprises 351 residues: S-adenosylmethionine:tRNA ribosyltransferase-isomerase (351 aa).

This sequence belongs to the QueA family. As to quaternary structure, monomer.

The protein resides in the cytoplasm. It carries out the reaction 7-aminomethyl-7-carbaguanosine(34) in tRNA + S-adenosyl-L-methionine = epoxyqueuosine(34) in tRNA + adenine + L-methionine + 2 H(+). It functions in the pathway tRNA modification; tRNA-queuosine biosynthesis. In terms of biological role, transfers and isomerizes the ribose moiety from AdoMet to the 7-aminomethyl group of 7-deazaguanine (preQ1-tRNA) to give epoxyqueuosine (oQ-tRNA). The sequence is that of S-adenosylmethionine:tRNA ribosyltransferase-isomerase from Fusobacterium nucleatum subsp. nucleatum (strain ATCC 25586 / DSM 15643 / BCRC 10681 / CIP 101130 / JCM 8532 / KCTC 2640 / LMG 13131 / VPI 4355).